The chain runs to 113 residues: Putative pterin-4-alpha-carbinolamine dehydratase (113 aa).

The protein belongs to the pterin-4-alpha-carbinolamine dehydratase family.

The catalysed reaction is (4aS,6R)-4a-hydroxy-L-erythro-5,6,7,8-tetrahydrobiopterin = (6R)-L-erythro-6,7-dihydrobiopterin + H2O. In Nitrosomonas eutropha (strain DSM 101675 / C91 / Nm57), this protein is Putative pterin-4-alpha-carbinolamine dehydratase.